A 112-amino-acid chain; its full sequence is Protein SMALL AUXIN UP-REGULATED RNA 10 (112 aa).

This sequence belongs to the ARG7 family. Confined to the veins and petioles of rosette leaves and cauline leaves, and specifically expressed at the abaxial side of inflorescence branche; relocates to both the adaxial (Ad) and abaxial (Ab) sides of the branch in reduced red:far-red (R:FR) light, during shade. Also present in flowers.

It is found in the cell membrane. In terms of biological role, provide a mechanistic link between auxin and plasma membrane H(+)-ATPases (PM H(+)-ATPases, e.g. AHA1 and AHA2), and triggers PM H(+)-ATPases activity by promoting phosphorylation of their C-terminal autoinhibitory domain as a result of PP2C-D subfamily of type 2C phosphatases inhibition, thus leading to the acidification of the apoplast and the facilitation of solutes and water uptake to drive cell expansion. Triggers plant growth probably by promoting cell elongation. Regulates branch angles and bending. The sequence is that of Protein SMALL AUXIN UP-REGULATED RNA 10 from Arabidopsis thaliana (Mouse-ear cress).